A 121-amino-acid chain; its full sequence is Small ribosomal subunit protein uS12c (121 aa).

It belongs to the universal ribosomal protein uS12 family. In terms of assembly, part of the 30S ribosomal subunit.

The protein localises to the plastid. It localises to the chloroplast. In terms of biological role, with S4 and S5 plays an important role in translational accuracy. Located at the interface of the 30S and 50S subunits. This is Small ribosomal subunit protein uS12c (rps12) from Bigelowiella natans (Pedinomonas minutissima).